The following is a 317-amino-acid chain: tRNA-dihydrouridine(16) synthase (317 aa).

Residues 7 to 9 and Gln-68 each bind FMN; that span reads PME. Cys-98 functions as the Proton donor in the catalytic mechanism. Residues Lys-139, 199–201, and 223–224 contribute to the FMN site; these read NGE and GR.

Belongs to the Dus family. DusC subfamily. Requires FMN as cofactor.

The catalysed reaction is 5,6-dihydrouridine(16) in tRNA + NADP(+) = uridine(16) in tRNA + NADPH + H(+). It carries out the reaction 5,6-dihydrouridine(16) in tRNA + NAD(+) = uridine(16) in tRNA + NADH + H(+). In terms of biological role, catalyzes the synthesis of 5,6-dihydrouridine (D), a modified base found in the D-loop of most tRNAs, via the reduction of the C5-C6 double bond in target uridines. Specifically modifies U16 in tRNAs. This Pseudomonas syringae pv. tomato (strain ATCC BAA-871 / DC3000) protein is tRNA-dihydrouridine(16) synthase.